Here is a 148-residue protein sequence, read N- to C-terminus: Arginine repressor (148 aa).

Belongs to the ArgR family.

The protein localises to the cytoplasm. Its pathway is amino-acid biosynthesis; L-arginine biosynthesis [regulation]. Regulates arginine biosynthesis genes. This Pelodictyon phaeoclathratiforme (strain DSM 5477 / BU-1) protein is Arginine repressor.